The sequence spans 222 residues: Triosephosphate isomerase (222 aa).

A substrate-binding site is contributed by 9–11; the sequence is NFK. Residue His-93 is the Electrophile of the active site. The active-site Proton acceptor is Glu-141. Substrate is bound by residues Ile-146, Gly-181, and 202–203; that span reads AS.

The protein belongs to the triosephosphate isomerase family. As to quaternary structure, homotetramer; dimer of dimers.

The protein localises to the cytoplasm. The enzyme catalyses D-glyceraldehyde 3-phosphate = dihydroxyacetone phosphate. The protein operates within carbohydrate biosynthesis; gluconeogenesis. It participates in carbohydrate degradation; glycolysis; D-glyceraldehyde 3-phosphate from glycerone phosphate: step 1/1. Functionally, involved in the gluconeogenesis. Catalyzes stereospecifically the conversion of dihydroxyacetone phosphate (DHAP) to D-glyceraldehyde-3-phosphate (G3P). The protein is Triosephosphate isomerase of Methanothermus fervidus (strain ATCC 43054 / DSM 2088 / JCM 10308 / V24 S).